A 140-amino-acid chain; its full sequence is Large ribosomal subunit protein uL14 (140 aa).

The protein belongs to the universal ribosomal protein uL14 family. As to quaternary structure, part of the 50S ribosomal subunit. Forms a cluster with proteins L3 and L24e, part of which may contact the 16S rRNA in 2 intersubunit bridges.

Functionally, binds to 23S rRNA. Forms part of two intersubunit bridges in the 70S ribosome. This Aeropyrum pernix (strain ATCC 700893 / DSM 11879 / JCM 9820 / NBRC 100138 / K1) protein is Large ribosomal subunit protein uL14.